We begin with the raw amino-acid sequence, 193 residues long: Holliday junction branch migration complex subunit RuvA (193 aa).

Residues 1-64 are domain I; it reads MIGRIAGTLL…EDAHLLFGFA (64 aa). Residues 65–144 form a domain II region; sequence TATERNTFRE…DLGHAPGATP (80 aa). The flexible linker stretch occupies residues 145–151; that stretch reads LADSAVD. The tract at residues 151 to 193 is domain III; it reads DILNALLALGYSEKEAAQAIKQVPAGTGVSDGIKLALKALSKG.

It belongs to the RuvA family. As to quaternary structure, homotetramer. Forms an RuvA(8)-RuvB(12)-Holliday junction (HJ) complex. HJ DNA is sandwiched between 2 RuvA tetramers; dsDNA enters through RuvA and exits via RuvB. An RuvB hexamer assembles on each DNA strand where it exits the tetramer. Each RuvB hexamer is contacted by two RuvA subunits (via domain III) on 2 adjacent RuvB subunits; this complex drives branch migration. In the full resolvosome a probable DNA-RuvA(4)-RuvB(12)-RuvC(2) complex forms which resolves the HJ.

The protein resides in the cytoplasm. The RuvA-RuvB-RuvC complex processes Holliday junction (HJ) DNA during genetic recombination and DNA repair, while the RuvA-RuvB complex plays an important role in the rescue of blocked DNA replication forks via replication fork reversal (RFR). RuvA specifically binds to HJ cruciform DNA, conferring on it an open structure. The RuvB hexamer acts as an ATP-dependent pump, pulling dsDNA into and through the RuvAB complex. HJ branch migration allows RuvC to scan DNA until it finds its consensus sequence, where it cleaves and resolves the cruciform DNA. In Cupriavidus metallidurans (strain ATCC 43123 / DSM 2839 / NBRC 102507 / CH34) (Ralstonia metallidurans), this protein is Holliday junction branch migration complex subunit RuvA.